A 389-amino-acid polypeptide reads, in one-letter code: Mannitol-1-phosphate 5-dehydrogenase (389 aa).

5 to 16 is a binding site for NAD(+); sequence AVHFGAGNIGRG. K215 is a catalytic residue.

Belongs to the mannitol dehydrogenase family. In terms of assembly, monomer.

It catalyses the reaction D-mannitol 1-phosphate + NAD(+) = beta-D-fructose 6-phosphate + NADH + H(+). In terms of biological role, catalyzes the NAD(H)-dependent interconversion of D-fructose 6-phosphate and D-mannitol 1-phosphate in the mannitol metabolic pathway. The protein is Mannitol-1-phosphate 5-dehydrogenase of Sclerotinia sclerotiorum (strain ATCC 18683 / 1980 / Ss-1) (White mold).